The following is a 537-amino-acid chain: CTP synthase (537 aa).

Residues methionine 1 to leucine 268 are amidoligase domain. Serine 14 provides a ligand contact to CTP. Serine 14 lines the UTP pocket. Serine 15 to isoleucine 20 contacts ATP. Tyrosine 55 is an L-glutamine binding site. Residue aspartate 72 participates in ATP binding. Mg(2+) contacts are provided by aspartate 72 and glutamate 142. Residues aspartate 149–glutamate 151, lysine 189–glutamine 194, and lysine 225 each bind CTP. Residues lysine 189–glutamine 194 and lysine 225 contribute to the UTP site. Positions asparagine 293–lysine 535 constitute a Glutamine amidotransferase type-1 domain. Glycine 355 is a binding site for L-glutamine. Cysteine 382 functions as the Nucleophile; for glutamine hydrolysis in the catalytic mechanism. Residues leucine 383 to glutamine 386, glutamate 406, and arginine 463 each bind L-glutamine. Residues histidine 508 and glutamate 510 contribute to the active site.

This sequence belongs to the CTP synthase family. Homotetramer.

The enzyme catalyses UTP + L-glutamine + ATP + H2O = CTP + L-glutamate + ADP + phosphate + 2 H(+). It catalyses the reaction L-glutamine + H2O = L-glutamate + NH4(+). The catalysed reaction is UTP + NH4(+) + ATP = CTP + ADP + phosphate + 2 H(+). Its pathway is pyrimidine metabolism; CTP biosynthesis via de novo pathway; CTP from UDP: step 2/2. Its activity is regulated as follows. Allosterically activated by GTP, when glutamine is the substrate; GTP has no effect on the reaction when ammonia is the substrate. The allosteric effector GTP functions by stabilizing the protein conformation that binds the tetrahedral intermediate(s) formed during glutamine hydrolysis. Inhibited by the product CTP, via allosteric rather than competitive inhibition. Functionally, catalyzes the ATP-dependent amination of UTP to CTP with either L-glutamine or ammonia as the source of nitrogen. Regulates intracellular CTP levels through interactions with the four ribonucleotide triphosphates. The chain is CTP synthase from Clostridium kluyveri (strain ATCC 8527 / DSM 555 / NBRC 12016 / NCIMB 10680 / K1).